The following is a 671-amino-acid chain: DNA ligase (671 aa).

NAD(+)-binding positions include 35-39 (DQQYD), 84-85 (SL), and Glu-113. The active-site N6-AMP-lysine intermediate is Lys-115. NAD(+) contacts are provided by Arg-136, Glu-170, Lys-285, and Lys-309. The Zn(2+) site is built by Cys-403, Cys-406, Cys-421, and Cys-426. Positions 588–671 (TTQTIFTNKK…QIIENSQIKL (84 aa)) constitute a BRCT domain.

It belongs to the NAD-dependent DNA ligase family. LigA subfamily. Requires Mg(2+) as cofactor. Mn(2+) is required as a cofactor.

It catalyses the reaction NAD(+) + (deoxyribonucleotide)n-3'-hydroxyl + 5'-phospho-(deoxyribonucleotide)m = (deoxyribonucleotide)n+m + AMP + beta-nicotinamide D-nucleotide.. DNA ligase that catalyzes the formation of phosphodiester linkages between 5'-phosphoryl and 3'-hydroxyl groups in double-stranded DNA using NAD as a coenzyme and as the energy source for the reaction. It is essential for DNA replication and repair of damaged DNA. The chain is DNA ligase from Onion yellows phytoplasma (strain OY-M).